We begin with the raw amino-acid sequence, 122 residues long: Double-headed protease inhibitor, submandibular gland (122 aa).

2 consecutive Kazal-like domains span residues 10-70 and 71-121; these read GGRK…ECDI and ECTQ…QCQS. Intrachain disulfides connect Cys-16/Cys-50, Cys-28/Cys-47, Cys-36/Cys-68, Cys-72/Cys-101, Cys-79/Cys-98, and Cys-87/Cys-119.

The protein resides in the secreted. Its function is as follows. This inhibitor is composed of two homologous actively inhibiting halves: one which inhibits trypsin, the other which inhibits elastase. In Panthera uncia (Snow leopard), this protein is Double-headed protease inhibitor, submandibular gland.